A 288-amino-acid chain; its full sequence is Diaminopimelate epimerase (288 aa).

2 residues coordinate substrate: N14 and N67. C76 functions as the Proton donor in the catalytic mechanism. Substrate is bound by residues G77–N78, N166, N199, and E217–R218. C226 (proton acceptor) is an active-site residue. Residue G227 to T228 participates in substrate binding.

It belongs to the diaminopimelate epimerase family. As to quaternary structure, homodimer.

The protein resides in the cytoplasm. The catalysed reaction is (2S,6S)-2,6-diaminopimelate = meso-2,6-diaminopimelate. It functions in the pathway amino-acid biosynthesis; L-lysine biosynthesis via DAP pathway; DL-2,6-diaminopimelate from LL-2,6-diaminopimelate: step 1/1. In terms of biological role, catalyzes the stereoinversion of LL-2,6-diaminopimelate (L,L-DAP) to meso-diaminopimelate (meso-DAP), a precursor of L-lysine and an essential component of the bacterial peptidoglycan. The polypeptide is Diaminopimelate epimerase (Bacillus cereus (strain ATCC 14579 / DSM 31 / CCUG 7414 / JCM 2152 / NBRC 15305 / NCIMB 9373 / NCTC 2599 / NRRL B-3711)).